The chain runs to 393 residues: Bifunctional chrysanthemol synthase, chloroplastic (393 aa).

The span at 1–18 shows a compositional bias: low complexity; that stretch reads MACSSSLSSKWASWGASS. The disordered stretch occupies residues 1–22; that stretch reads MACSSSLSSKWASWGASSRPHP. A chloroplast-targeting transit peptide spans 1 to 53; it reads MACSSSLSSKWASWGASSRPHPSVQPFVTRKNVVRYHKPTSELSYSPLTTTLS. 3 residues coordinate dimethylallyl diphosphate: lysine 99, arginine 102, and glutamine 137. Mg(2+)-binding residues include aspartate 144 and aspartate 148. Dimethylallyl diphosphate is bound by residues arginine 153, arginine 154, lysine 241, glutamine 280, aspartate 287, lysine 297, and lysine 306.

The protein belongs to the FPP/GGPP synthase family. Requires Mg(2+) as cofactor. In terms of tissue distribution, restricted to glandular trichomes during achene maturation. Expressed in flowers and in both ray and disk florets.

The protein localises to the plastid. Its subcellular location is the chloroplast. The catalysed reaction is 2 dimethylallyl diphosphate = (R,R)-chrysanthemyl diphosphate + diphosphate. It catalyses the reaction (R,R)-chrysanthemyl diphosphate + H2O = (R,R)-chrysanthemol + diphosphate. It carries out the reaction (R)-lavandulyl diphosphate + H2O = (R)-lavandulol + diphosphate. It functions in the pathway isoprenoid biosynthesis. In terms of biological role, component of the monoterpenoid pyrethrins biosynthesis; pyrethrins are widely used plant-derived pesticide. Catalyzes the condensation of two molecules of dimethylallyl diphosphate to produce chrysanthemyl diphosphate (CPP), a monoterpene with a non-head-to-tail or irregular c1'-2-3 linkage between isoprenoid units. In a second step, hydrolyzes the diphosphate moiety of CPP to form chrysanthemol. With a lower efficiency, can also converts dimethylallyl diphosphate into lavandulyl diphosphate (LPP), and subsequently LPP into lavandulol. The polypeptide is Bifunctional chrysanthemol synthase, chloroplastic (Tanacetum cinerariifolium (Dalmatian daisy)).